Here is a 349-residue protein sequence, read N- to C-terminus: Hydroxymethylglutaryl-CoA synthase (349 aa).

(3S)-3-hydroxy-3-methylglutaryl-CoA is bound by residues D29 and A30. Residue E81 is the Proton donor/acceptor of the active site. The (3S)-3-hydroxy-3-methylglutaryl-CoA site is built by C113 and T154. C113 (acyl-thioester intermediate) is an active-site residue. R202 serves as a coordination point for CoA. (3S)-3-hydroxy-3-methylglutaryl-CoA is bound by residues T204 and H237. H237 (proton donor/acceptor) is an active-site residue. K242 is a CoA binding site. K246, N269, and S299 together coordinate (3S)-3-hydroxy-3-methylglutaryl-CoA.

The protein belongs to the thiolase-like superfamily. Archaeal HMG-CoA synthase family. As to quaternary structure, interacts with acetoacetyl-CoA thiolase that catalyzes the precedent step in the pathway and with a DUF35 protein. The acetoacetyl-CoA thiolase/HMG-CoA synthase complex channels the intermediate via a fused CoA-binding site, which allows for efficient coupling of the endergonic thiolase reaction with the exergonic HMGCS reaction.

The enzyme catalyses acetoacetyl-CoA + acetyl-CoA + H2O = (3S)-3-hydroxy-3-methylglutaryl-CoA + CoA + H(+). The protein operates within metabolic intermediate biosynthesis; (R)-mevalonate biosynthesis; (R)-mevalonate from acetyl-CoA: step 2/3. Functionally, catalyzes the condensation of acetyl-CoA with acetoacetyl-CoA to form 3-hydroxy-3-methylglutaryl-CoA (HMG-CoA). Functions in the mevalonate (MVA) pathway leading to isopentenyl diphosphate (IPP), a key precursor for the biosynthesis of isoprenoid compounds that are building blocks of archaeal membrane lipids. The protein is Hydroxymethylglutaryl-CoA synthase of Methanosarcina barkeri (strain Fusaro / DSM 804).